The primary structure comprises 170 residues: MRTLTIEPLTKDAFAPFGDVIETDGSDHFMINNGSTMRFHRLAEVDTAQPDDKAIISIFRAESLPMPLTIGMLERHPQGSQAFIPLLGNPFLIVVAPVGDAPESALTRAFVSNGRQGVNYHRGVWHHPVLTIEKQDDFLVVDRSGSGNNCDEHYFEENQRLVLDPNPQEG.

It belongs to the ureidoglycolate lyase family. In terms of assembly, homodimer. It depends on Ni(2+) as a cofactor.

It catalyses the reaction (S)-ureidoglycolate = urea + glyoxylate. It functions in the pathway nitrogen metabolism; (S)-allantoin degradation. Its function is as follows. Catalyzes the catabolism of the allantoin degradation intermediate (S)-ureidoglycolate, generating urea and glyoxylate. Involved in the utilization of allantoin as nitrogen source. This is Ureidoglycolate lyase from Pseudomonas syringae pv. tomato (strain ATCC BAA-871 / DC3000).